The following is a 303-amino-acid chain: Sulfate adenylyltransferase subunit 2 (303 aa).

This sequence belongs to the PAPS reductase family. CysD subfamily. As to quaternary structure, heterodimer composed of CysD, the smaller subunit, and CysN.

It carries out the reaction sulfate + ATP + H(+) = adenosine 5'-phosphosulfate + diphosphate. It functions in the pathway sulfur metabolism; hydrogen sulfide biosynthesis; sulfite from sulfate: step 1/3. With CysN forms the ATP sulfurylase (ATPS) that catalyzes the adenylation of sulfate producing adenosine 5'-phosphosulfate (APS) and diphosphate, the first enzymatic step in sulfur assimilation pathway. APS synthesis involves the formation of a high-energy phosphoric-sulfuric acid anhydride bond driven by GTP hydrolysis by CysN coupled to ATP hydrolysis by CysD. The chain is Sulfate adenylyltransferase subunit 2 from Sulfurimonas denitrificans (strain ATCC 33889 / DSM 1251) (Thiomicrospira denitrificans (strain ATCC 33889 / DSM 1251)).